A 206-amino-acid polypeptide reads, in one-letter code: Probable nicotinate-nucleotide adenylyltransferase (206 aa).

It belongs to the NadD family.

The enzyme catalyses nicotinate beta-D-ribonucleotide + ATP + H(+) = deamido-NAD(+) + diphosphate. It functions in the pathway cofactor biosynthesis; NAD(+) biosynthesis; deamido-NAD(+) from nicotinate D-ribonucleotide: step 1/1. Functionally, catalyzes the reversible adenylation of nicotinate mononucleotide (NaMN) to nicotinic acid adenine dinucleotide (NaAD). In Gloeobacter violaceus (strain ATCC 29082 / PCC 7421), this protein is Probable nicotinate-nucleotide adenylyltransferase.